Consider the following 759-residue polypeptide: Phosphoribosylformylglycinamidine synthase subunit PurL (759 aa).

Residue His61 is part of the active site. ATP-binding residues include Tyr64 and Lys105. Mg(2+) is bound at residue Glu107. Residues 108-111 (SHNH) and Arg130 contribute to the substrate site. His109 serves as the catalytic Proton acceptor. Asp131 serves as a coordination point for Mg(2+). Residue Gln260 coordinates substrate. Position 288 (Asp288) interacts with Mg(2+). Position 332–334 (332–334 (ESQ)) interacts with substrate. ATP-binding residues include Asp520 and Gly557. Residue Asn558 participates in Mg(2+) binding. Ser560 is a substrate binding site.

This sequence belongs to the FGAMS family. As to quaternary structure, monomer. Part of the FGAM synthase complex composed of 1 PurL, 1 PurQ and 2 PurS subunits.

It localises to the cytoplasm. The enzyme catalyses N(2)-formyl-N(1)-(5-phospho-beta-D-ribosyl)glycinamide + L-glutamine + ATP + H2O = 2-formamido-N(1)-(5-O-phospho-beta-D-ribosyl)acetamidine + L-glutamate + ADP + phosphate + H(+). Its pathway is purine metabolism; IMP biosynthesis via de novo pathway; 5-amino-1-(5-phospho-D-ribosyl)imidazole from N(2)-formyl-N(1)-(5-phospho-D-ribosyl)glycinamide: step 1/2. In terms of biological role, part of the phosphoribosylformylglycinamidine synthase complex involved in the purines biosynthetic pathway. Catalyzes the ATP-dependent conversion of formylglycinamide ribonucleotide (FGAR) and glutamine to yield formylglycinamidine ribonucleotide (FGAM) and glutamate. The FGAM synthase complex is composed of three subunits. PurQ produces an ammonia molecule by converting glutamine to glutamate. PurL transfers the ammonia molecule to FGAR to form FGAM in an ATP-dependent manner. PurS interacts with PurQ and PurL and is thought to assist in the transfer of the ammonia molecule from PurQ to PurL. This chain is Phosphoribosylformylglycinamidine synthase subunit PurL, found in Thermoplasma acidophilum (strain ATCC 25905 / DSM 1728 / JCM 9062 / NBRC 15155 / AMRC-C165).